Reading from the N-terminus, the 303-residue chain is Dihydroorotate dehydrogenase B (NAD(+)), catalytic subunit (303 aa).

FMN is bound by residues S21 and 45–46 (KG). Substrate is bound by residues K45 and 69–73 (NAVGL). N99 and N127 together coordinate FMN. N127 is a binding site for substrate. Catalysis depends on C130, which acts as the Nucleophile. Positions 165 and 191 each coordinate FMN. 192–193 (NT) is a binding site for substrate. FMN-binding positions include G217, 243 to 244 (GG), and 265 to 266 (GT).

It belongs to the dihydroorotate dehydrogenase family. Type 1 subfamily. Heterotetramer of 2 PyrK and 2 PyrD type B subunits. The cofactor is FMN.

Its subcellular location is the cytoplasm. It catalyses the reaction (S)-dihydroorotate + NAD(+) = orotate + NADH + H(+). The protein operates within pyrimidine metabolism; UMP biosynthesis via de novo pathway; orotate from (S)-dihydroorotate (NAD(+) route): step 1/1. In terms of biological role, catalyzes the conversion of dihydroorotate to orotate with NAD(+) as electron acceptor. This chain is Dihydroorotate dehydrogenase B (NAD(+)), catalytic subunit (pyrD), found in Phocaeicola vulgatus (strain ATCC 8482 / DSM 1447 / JCM 5826 / CCUG 4940 / NBRC 14291 / NCTC 11154) (Bacteroides vulgatus).